Here is a 288-residue protein sequence, read N- to C-terminus: Ribosomal RNA small subunit methyltransferase A (288 aa).

6 residues coordinate S-adenosyl-L-methionine: asparagine 37, leucine 39, glycine 64, glutamate 86, aspartate 112, and asparagine 131.

This sequence belongs to the class I-like SAM-binding methyltransferase superfamily. rRNA adenine N(6)-methyltransferase family. RsmA subfamily.

The protein resides in the cytoplasm. It carries out the reaction adenosine(1518)/adenosine(1519) in 16S rRNA + 4 S-adenosyl-L-methionine = N(6)-dimethyladenosine(1518)/N(6)-dimethyladenosine(1519) in 16S rRNA + 4 S-adenosyl-L-homocysteine + 4 H(+). In terms of biological role, specifically dimethylates two adjacent adenosines (A1518 and A1519) in the loop of a conserved hairpin near the 3'-end of 16S rRNA in the 30S particle. May play a critical role in biogenesis of 30S subunits. This is Ribosomal RNA small subunit methyltransferase A from Rhodospirillum rubrum (strain ATCC 11170 / ATH 1.1.1 / DSM 467 / LMG 4362 / NCIMB 8255 / S1).